Here is a 408-residue protein sequence, read N- to C-terminus: CCA-adding enzyme (408 aa).

2 residues coordinate ATP: G8 and R11. CTP contacts are provided by G8 and R11. Mg(2+) is bound by residues E21 and D23. ATP-binding residues include R91, R137, and R140. CTP is bound by residues R91, R137, and R140. The region spanning 226–329 is the HD domain; that stretch reads TGYYTMTTLS…MTLFHVFDCW (104 aa).

It belongs to the tRNA nucleotidyltransferase/poly(A) polymerase family. Bacterial CCA-adding enzyme type 2 subfamily. It depends on Mg(2+) as a cofactor.

It catalyses the reaction a tRNA precursor + 2 CTP + ATP = a tRNA with a 3' CCA end + 3 diphosphate. It carries out the reaction a tRNA with a 3' CCA end + 2 CTP + ATP = a tRNA with a 3' CCACCA end + 3 diphosphate. Functionally, catalyzes the addition and repair of the essential 3'-terminal CCA sequence in tRNAs without using a nucleic acid template. Adds these three nucleotides in the order of C, C, and A to the tRNA nucleotide-73, using CTP and ATP as substrates and producing inorganic pyrophosphate. tRNA 3'-terminal CCA addition is required both for tRNA processing and repair. Also involved in tRNA surveillance by mediating tandem CCA addition to generate a CCACCA at the 3' terminus of unstable tRNAs. While stable tRNAs receive only 3'-terminal CCA, unstable tRNAs are marked with CCACCA and rapidly degraded. The polypeptide is CCA-adding enzyme (Blochmanniella pennsylvanica (strain BPEN)).